The chain runs to 121 residues: Large ribosomal subunit protein eL18 (121 aa).

The protein belongs to the eukaryotic ribosomal protein eL18 family.

The sequence is that of Large ribosomal subunit protein eL18 from Methanosphaerula palustris (strain ATCC BAA-1556 / DSM 19958 / E1-9c).